The primary structure comprises 1042 residues: Elongation factor 3 (1042 aa).

HEAT repeat units lie at residues K9–T46, P86–P124, Y167–N204, D206–A242, S243–D280, and P289–G327. 2 ABC transporter domains span residues E425–I642 and C668–E994. Positions 704, 923, 926, and 952 each coordinate ADP. Positions K1009–D1042 are disordered. Residues R1020–K1031 are compositionally biased toward basic residues.

It belongs to the ABC transporter superfamily. ABCF family. EF3 subfamily. In terms of assembly, monomer.

It localises to the cytoplasm. The catalysed reaction is ATP + H2O = ADP + phosphate + H(+). The protein operates within protein biosynthesis; polypeptide chain elongation. Its function is as follows. Ribosome-dependent ATPase that functions in cytoplasmic translation elongation. Required for the ATP-dependent release of deacylated tRNA from the ribosomal E-site during protein biosynthesis. Stimulates the eEF1A-dependent binding of aminoacyl-tRNA to the ribosomal A-site, which has reduced affinity for tRNA as long as the E-site is occupied. Assists translation termination by stimulating the release of nascent protein from the ribosome by release factors. This Pneumocystis carinii protein is Elongation factor 3 (TEF3).